Reading from the N-terminus, the 77-residue chain is MVRGRNRRAARRKRAAKRLKMQMWIDAYILQWDLDQAQKDLENARTRMLTEEMERLEEEVEMLMRELELLERMEEDG.

Its subcellular location is the host cytoplasm. The protein localises to the host nucleus. It is found in the host nucleolus. Its function is as follows. May function as a nucleic acid binding protein that modulates transcription of genes participating in the IFN response. The chain is Protein NS4 (Segment-9) from Antilocapra americana (Pronghorn).